The chain runs to 446 residues: Delta(8)-fatty-acid desaturase (446 aa).

A Cytochrome b5 heme-binding domain is found at 5–89 (KKYISVGELE…LEDYLVSEIS (85 aa)). 2 residues coordinate heme: H40 and H63. The next 2 membrane-spanning stretches (helical) occupy residues 112 to 132 (VIYC…GVLC) and 136 to 156 (LWVH…AAYL). Residues 158–162 (HDSGH) carry the Histidine box-1 motif. A run of 4 helical transmembrane segments spans residues 174–195 (FAQV…KWTH), 253–273 (IYLV…LLLF), 282–302 (ALNI…VSCL), and 309–329 (VLFV…FTLN). Residues 195–199 (HNAHH) carry the Histidine box-2 motif. A Histidine box-3 motif is present at residues 372 to 376 (QLEHH).

This sequence belongs to the fatty acid desaturase type 1 family. It depends on Fe cation as a cofactor. In terms of tissue distribution, expressed only in young leaves.

The protein resides in the membrane. The enzyme catalyses an N-acyl-(4R)-4-hydroxysphinganine + 2 Fe(II)-[cytochrome b5] + O2 + 2 H(+) = a (4R,8E)-4-hydroxysphingenine ceramide + 2 Fe(III)-[cytochrome b5] + 2 H2O. It carries out the reaction an N-acyl-(4R)-4-hydroxysphinganine + 2 Fe(II)-[cytochrome b5] + O2 + 2 H(+) = a (4R,8Z)-4-hydroxysphing-8-enine ceramide + 2 Fe(III)-[cytochrome b5] + 2 H2O. Its function is as follows. Plays a major role as delta(8)-fatty-acid desaturase which introduces a double bond at the 8-position in the long-chain base (LCB) of ceramides with or without a hydroxy group at the 4-position. The enzyme produces both the 8E and 8Z isomers (in a 4:1 ratio). This structural modification contributes to the quantitative partitioning of ceramides between the two major sphingolipid classes, glucosylceramides and glycosylinositolphosphoryl ceramides. Sphingolipids are important membrane components involved in environmental stress responses, such as resistance to chilling, and act as cell signaling molecules. This Borago officinalis (Bourrache) protein is Delta(8)-fatty-acid desaturase (sld1).